Reading from the N-terminus, the 106-residue chain is Synaptic plasticity regulator PANTS (106 aa).

Positions 67 to 106 are disordered; sequence LQQSEKTRLEGKQNNSPVWTLRKNPPPDWYLPLDPGKPRQ.

The protein belongs to the UPF0545 family. Rapidly degraded by proteolysis following neuronal stimulation, resulting in increased AMPA receptor clustering.

Its subcellular location is the synapse. The protein resides in the synaptic cleft. Functionally, negatively regulates long-term potentiation and modulates adult synaptic plasticity. The polypeptide is Synaptic plasticity regulator PANTS (Xenopus laevis (African clawed frog)).